The primary structure comprises 458 residues: MSVLVVGMSHQSAPVALLEKLSMDETVQNDTCRAMVSAGSLSEAMIISTCNRLEVYTVTNSFHSGVQDVVHNLAEVSGVEEEKLRSYLYVRYADAAAEHLMMVTSGLDSMVVGEQQIIGQVRTAYQFASEQGTVGPRIHALAQSALRTGKRVHSETEIDEAGSSMVSFAFDQALSRMGREDLAGKRVLILGAGAMASLAATHAGRLGAHLIIANRTIARAERVAQHAHEAGVYADVIDFSERAQALRDVDVAISATGAQGFTITAADVERYHVADRELMLVDLSLPRDIDDAVAEAEGVDLINIERLNNSLQAADTDLAAGTSPHAQARRIVSEELESYASEQRVRDVVPAVSALRKRAANLVQCEVARMEQKHPELDERQMGDINRALKRVADKLLHEPTVRAKQLAANSGTVSHETALQELFGLQLEGSGVAVDMAELPDAAQMEAAENTKEEKDA.

Substrate is bound by residues 49–52 (TCNR), serine 109, 114–116 (EQQ), and glutamine 120. The active-site Nucleophile is the cysteine 50. Residue 191-196 (GAGAMA) participates in NADP(+) binding.

The protein belongs to the glutamyl-tRNA reductase family. In terms of assembly, homodimer.

The catalysed reaction is (S)-4-amino-5-oxopentanoate + tRNA(Glu) + NADP(+) = L-glutamyl-tRNA(Glu) + NADPH + H(+). It functions in the pathway porphyrin-containing compound metabolism; protoporphyrin-IX biosynthesis; 5-aminolevulinate from L-glutamyl-tRNA(Glu): step 1/2. Its function is as follows. Catalyzes the NADPH-dependent reduction of glutamyl-tRNA(Glu) to glutamate 1-semialdehyde (GSA). The polypeptide is Glutamyl-tRNA reductase (Corynebacterium aurimucosum (strain ATCC 700975 / DSM 44827 / CIP 107346 / CN-1) (Corynebacterium nigricans)).